A 184-amino-acid chain; its full sequence is Small ribosomal subunit protein bS16 (184 aa).

Residues 150–160 are compositionally biased toward basic and acidic residues; that stretch reads KKAAEAAEKAA. The disordered stretch occupies residues 150-184; sequence KKAAEAAEKAAAEAPAEEATEAPAEEAAATEAAAE. The segment covering 164–173 has biased composition (acidic residues); sequence PAEEATEAPA. Residues 174–184 are compositionally biased toward low complexity; sequence EEAAATEAAAE.

The protein belongs to the bacterial ribosomal protein bS16 family.

The chain is Small ribosomal subunit protein bS16 from Bacteroides thetaiotaomicron (strain ATCC 29148 / DSM 2079 / JCM 5827 / CCUG 10774 / NCTC 10582 / VPI-5482 / E50).